A 322-amino-acid polypeptide reads, in one-letter code: uncharacterized protein (322 aa).

In terms of domain architecture, Radical SAM core spans 34 to 286; the sequence is KFKQKIFKIP…QRLSKDKVPE (253 aa). The [4Fe-4S] cluster site is built by cysteine 50, cysteine 58, and cysteine 61.

It belongs to the radical SAM superfamily. [4Fe-4S] cluster serves as cofactor.

This is an uncharacterized protein from Methanocaldococcus jannaschii (strain ATCC 43067 / DSM 2661 / JAL-1 / JCM 10045 / NBRC 100440) (Methanococcus jannaschii).